A 177-amino-acid polypeptide reads, in one-letter code: Large ribosomal subunit protein uL6 (177 aa).

Belongs to the universal ribosomal protein uL6 family. As to quaternary structure, part of the 50S ribosomal subunit.

This protein binds to the 23S rRNA, and is important in its secondary structure. It is located near the subunit interface in the base of the L7/L12 stalk, and near the tRNA binding site of the peptidyltransferase center. The polypeptide is Large ribosomal subunit protein uL6 (Enterobacter sp. (strain 638)).